The chain runs to 362 residues: 3-dehydroquinate synthase (362 aa).

Residues 70–75 (EGEQYK), 104–108 (GVIGD), 128–129 (TT), Lys-141, Lys-150, and 168–171 (TLTT) each bind NAD(+). Residues Glu-183, His-246, and His-263 each contribute to the Zn(2+) site.

This sequence belongs to the sugar phosphate cyclases superfamily. Dehydroquinate synthase family. Co(2+) is required as a cofactor. It depends on Zn(2+) as a cofactor. The cofactor is NAD(+).

It localises to the cytoplasm. The enzyme catalyses 7-phospho-2-dehydro-3-deoxy-D-arabino-heptonate = 3-dehydroquinate + phosphate. It participates in metabolic intermediate biosynthesis; chorismate biosynthesis; chorismate from D-erythrose 4-phosphate and phosphoenolpyruvate: step 2/7. Functionally, catalyzes the conversion of 3-deoxy-D-arabino-heptulosonate 7-phosphate (DAHP) to dehydroquinate (DHQ). The protein is 3-dehydroquinate synthase of Histophilus somni (strain 129Pt) (Haemophilus somnus).